The primary structure comprises 418 residues: Serine hydroxymethyltransferase (418 aa).

(6S)-5,6,7,8-tetrahydrofolate is bound by residues L121 and 125–127 (GHL). At K230 the chain carries N6-(pyridoxal phosphate)lysine. (6S)-5,6,7,8-tetrahydrofolate is bound at residue 356–358 (SPF).

Belongs to the SHMT family. Homodimer. Requires pyridoxal 5'-phosphate as cofactor.

It localises to the cytoplasm. It carries out the reaction (6R)-5,10-methylene-5,6,7,8-tetrahydrofolate + glycine + H2O = (6S)-5,6,7,8-tetrahydrofolate + L-serine. Its pathway is one-carbon metabolism; tetrahydrofolate interconversion. The protein operates within amino-acid biosynthesis; glycine biosynthesis; glycine from L-serine: step 1/1. In terms of biological role, catalyzes the reversible interconversion of serine and glycine with tetrahydrofolate (THF) serving as the one-carbon carrier. This reaction serves as the major source of one-carbon groups required for the biosynthesis of purines, thymidylate, methionine, and other important biomolecules. Also exhibits THF-independent aldolase activity toward beta-hydroxyamino acids, producing glycine and aldehydes, via a retro-aldol mechanism. The sequence is that of Serine hydroxymethyltransferase from Pseudoalteromonas translucida (strain TAC 125).